A 77-amino-acid chain; its full sequence is U-actitoxin-Avd12a (77 aa).

Positions methionine 1–serine 23 are cleaved as a signal peptide. Residues tyrosine 24–asparagine 29 constitute a propeptide that is removed on maturation. The region spanning glutamate 31 to glutamate 73 is the EGF-like domain. Intrachain disulfides connect cysteine 35–cysteine 50, cysteine 44–cysteine 61, and cysteine 63–cysteine 72.

It belongs to the EGF domain peptide family.

The protein localises to the secreted. The protein resides in the nematocyst. Has both toxic and EGF activity. Its EGF activity consists of rounding cells (morphological change) and inducing tyrosine phosphorylation of the EGFR in A431 cells, but with a lower potency that human EGF. The chain is U-actitoxin-Avd12a from Anemonia viridis (Snakelocks anemone).